Consider the following 288-residue polypeptide: Oxaloacetate decarboxylase (288 aa).

Residue Ser47 coordinates substrate. Asp85 contacts Mg(2+). Substrate-binding residues include Arg156 and His232.

This sequence belongs to the isocitrate lyase/PEP mutase superfamily. Oxaloacetate decarboxylase family. In terms of assembly, homotetramer; dimer of dimers. The cofactor is Mg(2+).

It catalyses the reaction oxaloacetate + H(+) = pyruvate + CO2. Its function is as follows. Catalyzes the decarboxylation of oxaloacetate into pyruvate. Seems to play a role in maintaining cellular concentrations of bicarbonate and pyruvate. The protein is Oxaloacetate decarboxylase of Rhodopseudomonas palustris (strain ATCC BAA-98 / CGA009).